Reading from the N-terminus, the 27-residue chain is ITFSKIYRSCKSDSDCGNQKCARGRCV.

This sequence belongs to the u18-CNTX family. Expressed by the venom gland.

The protein localises to the secreted. Functionally, not toxic to mice by intracerebroventricular injection. This chain is U18-ctenitoxin-Co1a, found in Ctenus ornatus (Brazilian spider).